The sequence spans 273 residues: Glutamate 5-kinase (273 aa).

K15 provides a ligand contact to ATP. 3 residues coordinate substrate: S55, D142, and N158. Residues 178 to 179 (SD) and 220 to 226 (TGGMLSK) each bind ATP.

It belongs to the glutamate 5-kinase family.

The protein resides in the cytoplasm. The enzyme catalyses L-glutamate + ATP = L-glutamyl 5-phosphate + ADP. It functions in the pathway amino-acid biosynthesis; L-proline biosynthesis; L-glutamate 5-semialdehyde from L-glutamate: step 1/2. In terms of biological role, catalyzes the transfer of a phosphate group to glutamate to form L-glutamate 5-phosphate. The protein is Glutamate 5-kinase of Streptococcus pyogenes serotype M49 (strain NZ131).